Consider the following 842-residue polypeptide: Oligopeptide transporter phomP2' (842 aa).

The interval 1 to 58 (MEADPKVPFTDEMNIQDEHNWESGSWSSSRRSNDSNVTLLSRRSSVEQHEDERQKDSD) is disordered. Low complexity predominate over residues 23–36 (SGSWSSSRRSNDSN). 2 N-linked (GlcNAc...) asparagine glycosylation sites follow: Asn-33 and Asn-36. Positions 44 to 58 (SSVEQHEDERQKDSD) are enriched in basic and acidic residues. 6 helical membrane passes run 105–125 (VWLLSTFWVLAGCSISTVYYF), 177–197 (ALVVIAYWGSSYTAYGLGPLS), 210–230 (PWAITFLVTTQLTGYGLVGLY), 268–288 (VFMAIASAAFVYQWLPSFVFP), 315–335 (GFGLMDFSLDWNYVAFLSPLF), and 345–365 (FVGAALAVWITYPVAYFSDAL). N-linked (GlcNAc...) asparagine glycans are attached at residues Asn-386 and Asn-398. The next 4 helical transmembrane spans lie at 415-435 (AMHFFWGFASASAIVTYAVLF), 478-498 (AWYALLLAVCLCLGTIQLYAG), 505-525 (WGLQLVVAISALFTLPCGMLF), and 585-605 (WELLVAQVYGTLLGPFVNWAV). Over residues 629–649 (QGLGLGQGGGGGGGGGGGGGQ) the composition is skewed to gly residues. The interval 629–657 (QGLGLGQGGGGGGGGGGGGGQQQRAAGAH) is disordered. The next 3 helical transmembrane spans lie at 668–688 (NFFSSSVIWGVMGPARVFGGG), 700–720 (WLLPSGFAVGAAAVLLLWLIH), and 731–751 (WPLHPAIIFHGASLFPVFPTT). Asn-752 carries N-linked (GlcNAc...) asparagine glycosylation. A helical transmembrane segment spans residues 784–804 (AGLDCGAQLVQMVLGLAFLVF).

It belongs to the oligopeptide OPT transporter family.

It is found in the membrane. Oligopeptide transporter; part of the gene cluster that mediates the biosynthesis of the phomopsins, a group of hexapeptide mycotoxins which infects lupins and causes lupinosis disease in livestock. The polypeptide is Oligopeptide transporter phomP2' (Diaporthe leptostromiformis (Lupinosis disease fungus)).